Here is a 1247-residue protein sequence, read N- to C-terminus: F-box/WD repeat-containing protein A (1247 aa).

In terms of domain architecture, START spans 1-214 (MQYVNGNDIS…PATVSGRLAK (214 aa)). 2 disordered regions span residues 484-514 (GNKD…DNII) and 552-576 (QQPQ…KEIK). Low complexity predominate over residues 552-566 (QQPQQQQQQPQEQQQ). In terms of domain architecture, F-box spans 631–677 (NSGFDNLPEEVVQIIFSNLSAINIVNLSLVCKRFKMATDSPILWKNL). 2 disordered regions span residues 697 to 744 (SNLS…QQQQ) and 833 to 856 (GQES…KRDN). Low complexity-rich tracts occupy residues 707 to 719 (NSNS…GSSS) and 726 to 744 (QQQN…QQQQ). A compositionally biased stretch (polar residues) spans 833 to 846 (GQESPINKNSSDNP). WD repeat units follow at residues 895 to 934 (GHNR…GDYE), 945 to 984 (DHTQ…IEVI), 988 to 1025 (RPTN…LLWN), 1029 to 1073 (AHTK…CINT), 1076 to 1114 (GHSY…TFIS), 1119 to 1158 (KHTG…LSNI), and 1218 to 1247 (NHES…RWDF).

As to quaternary structure, component of an SCF complex including at least culA. Formation of this complex appears to require activity of the MAP kinase erk2. Interacts with regA.

Substrate recognition component of a SCF (SKP1-CUL1-F-box protein) E3 ubiquitin-protein ligase complex which mediates the ubiquitination and subsequent proteasomal degradation of target proteins. May target the cAMP phosphodiesterase regA for degradation leading to an increase in cAMP and PKA activity. Promotes development of prestalk cells as opposed to prespores within the developing fruiting body. Required for culmination and fruiting body development. The polypeptide is F-box/WD repeat-containing protein A (fbxA) (Dictyostelium discoideum (Social amoeba)).